The following is an 88-amino-acid chain: MGTARFLSAVLLLSVLLMVTFPALLSAEYHDGRVDICSLPPDSGDCLRFFEMWYFDGTTCTKFVYGGYGGNDNRFPTEKACMKRCAKA.

Positions 1–27 are cleaved as a signal peptide; that stretch reads MGTARFLSAVLLLSVLLMVTFPALLSA. Residues 28–33 constitute a propeptide that is removed on maturation; it reads EYHDGR. The region spanning 37 to 85 is the BPTI/Kunitz inhibitor domain; sequence CSLPPDSGDCLRFFEMWYFDGTTCTKFVYGGYGGNDNRFPTEKACMKRC. Cystine bridges form between Cys37/Cys85 and Cys60/Cys81.

This sequence belongs to the venom Kunitz-type family. 03 (sub-Kunitz) subfamily. Expressed by the venom gland.

The protein localises to the secreted. In terms of biological role, serine protease inhibitor that inhibits trypsin at a molar ratio of 1:1. This is Kunitz-type U15-theraphotoxin-Hs1c from Cyriopagopus schmidti (Chinese bird spider).